The primary structure comprises 461 residues: Glutamyl-tRNA reductase (461 aa).

Substrate is bound by residues 50-53 (TCNR), Ser-111, 116-118 (EPQ), and Gln-122. Cys-51 functions as the Nucleophile in the catalytic mechanism. An NADP(+)-binding site is contributed by 191 to 196 (GAGEMA).

Belongs to the glutamyl-tRNA reductase family. As to quaternary structure, homodimer.

The catalysed reaction is (S)-4-amino-5-oxopentanoate + tRNA(Glu) + NADP(+) = L-glutamyl-tRNA(Glu) + NADPH + H(+). The protein operates within porphyrin-containing compound metabolism; protoporphyrin-IX biosynthesis; 5-aminolevulinate from L-glutamyl-tRNA(Glu): step 1/2. Functionally, catalyzes the NADPH-dependent reduction of glutamyl-tRNA(Glu) to glutamate 1-semialdehyde (GSA). This is Glutamyl-tRNA reductase from Syntrophobacter fumaroxidans (strain DSM 10017 / MPOB).